The following is a 48-amino-acid chain: Large ribosomal subunit protein bL36c (48 aa).

The protein belongs to the bacterial ribosomal protein bL36 family.

Its subcellular location is the plastid. It localises to the chloroplast. The polypeptide is Large ribosomal subunit protein bL36c (Rhodomonas salina (Cryptomonas salina)).